Consider the following 533-residue polypeptide: Glucose-6-phosphate isomerase (533 aa).

E322 acts as the Proton donor in catalysis. Catalysis depends on residues H351 and K455.

It belongs to the GPI family.

The protein resides in the cytoplasm. The enzyme catalyses alpha-D-glucose 6-phosphate = beta-D-fructose 6-phosphate. The protein operates within carbohydrate biosynthesis; gluconeogenesis. It participates in carbohydrate degradation; glycolysis; D-glyceraldehyde 3-phosphate and glycerone phosphate from D-glucose: step 2/4. Catalyzes the reversible isomerization of glucose-6-phosphate to fructose-6-phosphate. This is Glucose-6-phosphate isomerase from Desulfitobacterium hafniense (strain DSM 10664 / DCB-2).